The sequence spans 236 residues: Small ribosomal subunit protein uS3 (236 aa).

The region spanning 39 to 107 is the KH type-2 domain; it reads IRLYVLEELK…ETSLNIVEIH (69 aa). The disordered stretch occupies residues 216–236; it reads ERRAAEVDHSGSSSNRRRENA.

The protein belongs to the universal ribosomal protein uS3 family. As to quaternary structure, part of the 30S ribosomal subunit. Forms a tight complex with proteins S10 and S14.

In terms of biological role, binds the lower part of the 30S subunit head. Binds mRNA in the 70S ribosome, positioning it for translation. This Bartonella henselae (strain ATCC 49882 / DSM 28221 / CCUG 30454 / Houston 1) (Rochalimaea henselae) protein is Small ribosomal subunit protein uS3.